The chain runs to 230 residues: uncharacterized protein (230 aa).

The segment at 1–57 (MPGPHSPNPGVGTNGPAPYPEPSSHEPQALDYPHDLGAAEPAFAPGPADDAALPPAA) is disordered. The span at 38 to 55 (AAEPAFAPGPADDAALPP) shows a compositional bias: low complexity. A helical membrane pass occupies residues 75-95 (LLIGIVVALALVSAMTAAIIY).

It is found in the membrane. This is an uncharacterized protein from Mycobacterium tuberculosis (strain CDC 1551 / Oshkosh).